Reading from the N-terminus, the 85-residue chain is U4-theraphotoxin-Hhn1a (85 aa).

The first 22 residues, 1–22 (MKVTLIAILTCATVLVLHTTAA), serve as a signal peptide directing secretion. Positions 23-48 (EELEAESQLMEVGMPDTELAAVDEER) are excised as a propeptide. 3 cysteine pairs are disulfide-bonded: Cys-52–Cys-66, Cys-56–Cys-77, and Cys-71–Cys-82.

It belongs to the neurotoxin 12 (Hwtx-2) family. 02 (Hwtx-2) subfamily. As to quaternary structure, monomer. In terms of tissue distribution, expressed by the venom gland.

It localises to the secreted. Neurotoxin active on both insects and mammals. The polypeptide is U4-theraphotoxin-Hhn1a (Cyriopagopus hainanus (Chinese bird spider)).